Consider the following 786-residue polypeptide: Aculeacin-A acylase (786 aa).

The N-terminal stretch at 1-22 is a signal peptide; sequence MTSSYMRLKAAAIAFGVIVATA. Residues 23-34 constitute a propeptide that is removed on maturation; the sequence is AVPSPASGREHD. The substrate-binding stretch occupies residues 35–130; it reads GGYAALIRRA…PRDGVRAPCD (96 aa). Residues 215–229 constitute a propeptide, spacer peptide; that stretch reads AAIAAALDGTSAGIG. Residues 220 to 239 are possible recognition-sequence of an AAC processing enzyme; that stretch reads ALDGTSAGIGSNAYGLGAQA. The Nucleophile role is filled by serine 230. The segment at 658 to 689 is disordered; the sequence is ACNGSPASPSTRSVGDIHTDSRGERRIPIHGG. A compositionally biased stretch (basic and acidic residues) spans 672–684; that stretch reads GDIHTDSRGERRI.

This sequence belongs to the peptidase S45 family. Heterodimer of a small subunit and a large subunit processed from the same precursor.

The protein resides in the secreted. In terms of biological role, catalyzes the hydrolysis of the palmitoyl moiety of the antifungal antibiotic, aculeacin-A, giving a hexapeptide moiety and a long chain fatty acid. This Actinoplanes utahensis protein is Aculeacin-A acylase (aac).